Here is a 177-residue protein sequence, read N- to C-terminus: Large ribosomal subunit protein uL6 (177 aa).

It belongs to the universal ribosomal protein uL6 family. As to quaternary structure, part of the 50S ribosomal subunit.

Functionally, this protein binds to the 23S rRNA, and is important in its secondary structure. It is located near the subunit interface in the base of the L7/L12 stalk, and near the tRNA binding site of the peptidyltransferase center. The sequence is that of Large ribosomal subunit protein uL6 from Methylobacterium nodulans (strain LMG 21967 / CNCM I-2342 / ORS 2060).